Reading from the N-terminus, the 425-residue chain is Dihydroorotase (425 aa).

Zn(2+) is bound by residues H60 and H62. Residues 62–64 (HLR) and N94 contribute to the substrate site. Residues D152, H179, and H232 each coordinate Zn(2+). N278 lines the substrate pocket. D305 contacts Zn(2+). D305 is an active-site residue. Residue H309 participates in substrate binding.

Belongs to the metallo-dependent hydrolases superfamily. DHOase family. Class I DHOase subfamily. Requires Zn(2+) as cofactor.

The catalysed reaction is (S)-dihydroorotate + H2O = N-carbamoyl-L-aspartate + H(+). It participates in pyrimidine metabolism; UMP biosynthesis via de novo pathway; (S)-dihydroorotate from bicarbonate: step 3/3. In terms of biological role, catalyzes the reversible cyclization of carbamoyl aspartate to dihydroorotate. The polypeptide is Dihydroorotase (Syntrophotalea carbinolica (strain DSM 2380 / NBRC 103641 / GraBd1) (Pelobacter carbinolicus)).